Consider the following 727-residue polypeptide: 5'-AMP-activated serine/threonine-protein kinase catalytic subunit alpha (727 aa).

Residues 31–284 enclose the Protein kinase domain; that stretch reads YRLDKTLGIG…IHEIRNHPWF (254 aa). ATP-binding positions include 37–45 and lysine 60; that span reads LGIGSFGKV. Residue aspartate 154 is the Proton acceptor of the active site. Threonine 188 carries the phosphothreonine modification. Residues 382-590 are disordered; that stretch reads FTTTTGFNPS…GSNNNSYEGG (209 aa). Composition is skewed to low complexity over residues 391-483 and 494-586; these read SNSN…SSIS and NLNN…NNNS. A KA1 domain is found at 679–727; that stretch reads RMVNGKPIKLVLQLFRVAENRYLLDIKKIEGEIFIFFDICSLMLEELNL.

The protein belongs to the protein kinase superfamily. CAMK Ser/Thr protein kinase family. SNF1 subfamily. Heterotrimer of an alpha catalytic subunit, a beta and a gamma non-catalytic subunits.

The enzyme catalyses L-seryl-[protein] + ATP = O-phospho-L-seryl-[protein] + ADP + H(+). It catalyses the reaction L-threonyl-[protein] + ATP = O-phospho-L-threonyl-[protein] + ADP + H(+). Activated enzyme phosphorylates target proteins and initiates downstream signaling pathways that shift metabolism from anabolic to catabolic pathways. Acts as a highly sensitive cellular energy sensor. The protein is 5'-AMP-activated serine/threonine-protein kinase catalytic subunit alpha (snfA) of Dictyostelium discoideum (Social amoeba).